The chain runs to 246 residues: Deoxycytidylate 5-hydroxymethyltransferase (246 aa).

Residue C148 is part of the active site.

This sequence belongs to the thymidylate synthase family.

The catalysed reaction is dCMP + (6R)-5,10-methylene-5,6,7,8-tetrahydrofolate + H2O = 5-hydroxymethyl-dCMP + (6S)-5,6,7,8-tetrahydrofolate. In Enterobacteria phage T4 (Bacteriophage T4), this protein is Deoxycytidylate 5-hydroxymethyltransferase (42).